We begin with the raw amino-acid sequence, 506 residues long: Probable Xaa-Pro aminopeptidase BDBG_08406 (506 aa).

Mn(2+) is bound by residues aspartate 285, aspartate 296, glutamate 433, and glutamate 471.

This sequence belongs to the peptidase M24B family. The cofactor is Mn(2+).

The catalysed reaction is Release of any N-terminal amino acid, including proline, that is linked to proline, even from a dipeptide or tripeptide.. In terms of biological role, catalyzes the removal of a penultimate prolyl residue from the N-termini of peptides. This chain is Probable Xaa-Pro aminopeptidase BDBG_08406, found in Blastomyces gilchristii (strain SLH14081) (Blastomyces dermatitidis).